A 144-amino-acid polypeptide reads, in one-letter code: Bacilliredoxin BCE_4227 (144 aa).

The protein belongs to the bacilliredoxin family.

The chain is Bacilliredoxin BCE_4227 from Bacillus cereus (strain ATCC 10987 / NRS 248).